We begin with the raw amino-acid sequence, 255 residues long: Enkurin (255 aa).

Positions 1 to 10 are enriched in polar residues; it reads MDSPCTSESI. 2 disordered regions span residues 1 to 25 and 67 to 96; these read MDSPCTSESIYNLIPSDLKEPPQHP and SKEKTLPPKKKFNRCSPKKPAVPLRTDHPV. The segment covering 73 to 83 has biased composition (basic residues); that stretch reads PPKKKFNRCSP. The SH3-binding motif lies at 83–89; it reads PKKPAVP. An Enkurin domain is found at 160–252; that stretch reads KRNEDVKKAQ…VIEKHKIIYI (93 aa). The interaction with TRPC proteins stretch occupies residues 160-255; the sequence is KRNEDVKKAQ…KHKIIYIANK (96 aa). In terms of domain architecture, IQ spans 176 to 187; sequence IQENLKKAAMKR.

Microtubule inner protein component of sperm flagellar doublet microtubules. Binds calmodulin via its IQ domain. Interacts with TRPC1, TRPC2, TRPC5, but not TRPC3. Interacts with CFAP45. In terms of tissue distribution, high expression in testis and vomeronasal organ and lower expression in ovary, heart, lung, and brain. Not expressed in other tissues.

The protein localises to the cytoplasm. It localises to the cytoskeleton. It is found in the cilium axoneme. Its subcellular location is the flagellum axoneme. Its function is as follows. Adapter that functions to localize a calcium-sensitive signal transduction machinery in sperm to a calcium-permeable ion channel. Microtubule inner protein (MIP) part of the dynein-decorated doublet microtubules (DMTs) in cilia axoneme, which is required for motile cilia beating. The protein is Enkurin (Enkur) of Mus musculus (Mouse).